Reading from the N-terminus, the 155-residue chain is SsrA-binding protein (155 aa).

It belongs to the SmpB family.

The protein localises to the cytoplasm. In terms of biological role, required for rescue of stalled ribosomes mediated by trans-translation. Binds to transfer-messenger RNA (tmRNA), required for stable association of tmRNA with ribosomes. tmRNA and SmpB together mimic tRNA shape, replacing the anticodon stem-loop with SmpB. tmRNA is encoded by the ssrA gene; the 2 termini fold to resemble tRNA(Ala) and it encodes a 'tag peptide', a short internal open reading frame. During trans-translation Ala-aminoacylated tmRNA acts like a tRNA, entering the A-site of stalled ribosomes, displacing the stalled mRNA. The ribosome then switches to translate the ORF on the tmRNA; the nascent peptide is terminated with the 'tag peptide' encoded by the tmRNA and targeted for degradation. The ribosome is freed to recommence translation, which seems to be the essential function of trans-translation. The chain is SsrA-binding protein from Helicobacter hepaticus (strain ATCC 51449 / 3B1).